We begin with the raw amino-acid sequence, 445 residues long: Signal recognition particle 54 kDa protein (445 aa).

GTP is bound by residues 102–109 (GVQGSGKT), 184–188 (DTAGR), and 244–247 (TKMD).

Belongs to the GTP-binding SRP family. SRP54 subfamily. As to quaternary structure, part of the signal recognition particle protein translocation system, which is composed of SRP and FtsY. Archaeal SRP consists of a 7S RNA molecule of 300 nucleotides and two protein subunits: SRP54 and SRP19.

The protein resides in the cytoplasm. The catalysed reaction is GTP + H2O = GDP + phosphate + H(+). Its function is as follows. Involved in targeting and insertion of nascent membrane proteins into the cytoplasmic membrane. Binds to the hydrophobic signal sequence of the ribosome-nascent chain (RNC) as it emerges from the ribosomes. The SRP-RNC complex is then targeted to the cytoplasmic membrane where it interacts with the SRP receptor FtsY. This Sulfurisphaera tokodaii (strain DSM 16993 / JCM 10545 / NBRC 100140 / 7) (Sulfolobus tokodaii) protein is Signal recognition particle 54 kDa protein.